The primary structure comprises 263 residues: Probable cyclic nucleotide phosphodiesterase CPS_4178 (263 aa).

Residues D21, H23, D62, N94, H160, H198, and H200 each contribute to the Fe cation site. AMP is bound by residues H23, D62, and 94–95 (NH). An AMP-binding site is contributed by H200.

It belongs to the cyclic nucleotide phosphodiesterase class-III family. The cofactor is Fe(2+).

In Colwellia psychrerythraea (strain 34H / ATCC BAA-681) (Vibrio psychroerythus), this protein is Probable cyclic nucleotide phosphodiesterase CPS_4178.